The following is a 396-amino-acid chain: Elongation factor Tu 2 (396 aa).

A tr-type G domain is found at 10–206; the sequence is KLHVNVGTIG…ALDTFIPDPT (197 aa). Residues 19–26 form a G1 region; sequence GHVDHGKT. Position 19-26 (19-26) interacts with GTP; the sequence is GHVDHGKT. Position 26 (threonine 26) interacts with Mg(2+). The interval 60–64 is G2; it reads GITIS. The G3 stretch occupies residues 81–84; sequence DCPG. Residues 81 to 85 and 136 to 139 contribute to the GTP site; these read DCPGH and NKAD. Residues 136–139 are G4; it reads NKAD. The G5 stretch occupies residues 174-176; it reads SAR.

It belongs to the TRAFAC class translation factor GTPase superfamily. Classic translation factor GTPase family. EF-Tu/EF-1A subfamily. As to quaternary structure, monomer.

It localises to the cytoplasm. The enzyme catalyses GTP + H2O = GDP + phosphate + H(+). Functionally, GTP hydrolase that promotes the GTP-dependent binding of aminoacyl-tRNA to the A-site of ribosomes during protein biosynthesis. The polypeptide is Elongation factor Tu 2 (Xanthomonas campestris pv. campestris (strain 8004)).